Here is a 105-residue protein sequence, read N- to C-terminus: Venom metalloprotease inhibitor (105 aa).

Residues 1 to 21 (MFRFVCVLFIALVVFCTTTSA) form the signal peptide. 5 cysteine pairs are disulfide-bonded: C26–C61, C35–C57, C39–C50, C43–C83, and C63–C77. The TIL domain occupies 26–83 (CNRPNEEYRCGSACQTTCATLGQRCPIMNIRCNDACYCKEGYARYGDDTGMCVSISQC).

Belongs to the serine protease inhibitor-like (TIL domain-containing) family. Expressed by the venom gland.

The protein resides in the secreted. Its function is as follows. Inhibits metalloprotease (human MMP3), trypsin, chymotrypsin, plasmin and microbial serine protease (proteinase K). Exhibits antifibrinolytic activity by binding plasmin and inhibiting it. Does not inhibit elastase, thrombin or microbial serine protease (subtilisin A). The protein is Venom metalloprotease inhibitor of Bombus ignitus (Bumblebee).